Here is a 260-residue protein sequence, read N- to C-terminus: Thiamine thiazole synthase (260 aa).

NAD(+) is bound by residues Ala36, Glu55–Gln56, Gly63, and His154–Asp156. Residues Asp156 and His171 each coordinate Fe cation. Met224 lines the NAD(+) pocket. Residue Arg234 coordinates glycine.

Belongs to the THI4 family. Homooctamer; tetramer of dimers. Fe(2+) is required as a cofactor.

The enzyme catalyses hydrogen sulfide + glycine + NAD(+) = ADP-5-ethyl-4-methylthiazole-2-carboxylate + nicotinamide + 3 H2O + H(+). It participates in cofactor biosynthesis; thiamine diphosphate biosynthesis. Functionally, involved in the biosynthesis of the thiazole moiety of thiamine. Catalyzes the conversion of NAD and glycine to adenosine diphosphate 5-(2-hydroxyethyl)-4-methylthiazole-2-carboxylate (ADT), an adenylated thiazole intermediate, using free sulfide as a source of sulfur. The protein is Thiamine thiazole synthase of Methanosarcina barkeri (strain Fusaro / DSM 804).